The following is a 551-amino-acid chain: Methionine--tRNA ligase (551 aa).

Residues 12–22 carry the 'HIGH' region motif; the sequence is PYANGPLHFGH. Zn(2+)-binding residues include C144, C147, C157, and C160. The 'KMSKS' region signature appears at 330–334; that stretch reads QFSKS. Position 333 (K333) interacts with ATP.

Belongs to the class-I aminoacyl-tRNA synthetase family. MetG type 1 subfamily. In terms of assembly, monomer. It depends on Zn(2+) as a cofactor.

It is found in the cytoplasm. It catalyses the reaction tRNA(Met) + L-methionine + ATP = L-methionyl-tRNA(Met) + AMP + diphosphate. Is required not only for elongation of protein synthesis but also for the initiation of all mRNA translation through initiator tRNA(fMet) aminoacylation. In Chlamydia abortus (strain DSM 27085 / S26/3) (Chlamydophila abortus), this protein is Methionine--tRNA ligase.